The chain runs to 207 residues: Cytochrome c biogenesis ATP-binding export protein CcmA (207 aa).

Residues 4 to 207 (LEARELLCER…RISLTQTRAA (204 aa)) form the ABC transporter domain. 36–43 (GSNGAGKT) provides a ligand contact to ATP.

Belongs to the ABC transporter superfamily. CcmA exporter (TC 3.A.1.107) family. The complex is composed of two ATP-binding proteins (CcmA) and two transmembrane proteins (CcmB).

It is found in the cell inner membrane. The enzyme catalyses heme b(in) + ATP + H2O = heme b(out) + ADP + phosphate + H(+). Part of the ABC transporter complex CcmAB involved in the biogenesis of c-type cytochromes; once thought to export heme, this seems not to be the case, but its exact role is uncertain. Responsible for energy coupling to the transport system. In Shigella boydii serotype 4 (strain Sb227), this protein is Cytochrome c biogenesis ATP-binding export protein CcmA.